Here is a 499-residue protein sequence, read N- to C-terminus: MDVDILLSLVLAFFGWAAIYFLTSRLSFGKRARLPPGPYPFPVIGNIFQLGQNPNQSLTKLAKTYGPLMSLKLGSNTTVVVSSPAVAREVLQKNDQVFSSRIIPHAAEAHAHHKYSMVWLQVSGLWRNLRKISKEHMFAAQRLDASEGLRQEKLQELHDYLVRCSTSNKAVNFGQTAFTTSLNFISSTFFSVDFAAYGSDSSQEFKDIVWRILKSYSTPNVADYFPVLKFMDPQGILQKNTFLFSKMFDIFDNIINERLMMRGSLDTSKKNDLLEALLNHSANNESEFSLNELKHMLLDLFLGGTETTSTTLEWAMAELLRNPEKLERVRAELHQVIGEKEIIHESDISRLPYLQAIVKETFRLHPIVPLLIPHKAEADVEINGYTVPKNSQILINVWASGRDSGTWLDPETFSPERFLHSEIDMKGRHFELIPFGAGRRICPGLPLAYRTLHTMLATCIHNFDWKLKDGMKPEDIDMEEKYGLTLQLAVPLNVIPVKL.

A helical transmembrane segment spans residues 3–23; the sequence is VDILLSLVLAFFGWAAIYFLT. N-linked (GlcNAc...) asparagine glycosylation is found at asparagine 55, asparagine 76, asparagine 279, and asparagine 284. Cysteine 442 contributes to the heme binding site.

It belongs to the cytochrome P450 family.

The protein localises to the membrane. This is Cytochrome P450 76T24 from Catharanthus roseus (Madagascar periwinkle).